Reading from the N-terminus, the 78-residue chain is COP9 signalosome complex subunit 5b (78 aa).

The protein belongs to the peptidase M67A family. CSN5 subfamily. As to quaternary structure, component of the CSN complex, probably composed of CSN1, CSN2, CSN3, CSN4, CSN5 (CSN5A or CSN5B), CSN6 (CSN6A or CSN6B), CSN7 and CSN8. It depends on a divalent metal cation as a cofactor.

It localises to the cytoplasm. The protein localises to the nucleus. Its function is as follows. Probable protease subunit of the COP9 signalosome complex (CSN), a complex involved in various cellular and developmental processes such as photomorphogenesis and auxin and jasmonate responses. The CSN complex is an essential regulator of the ubiquitin (Ubl) conjugation pathway by mediating the deneddylation of the cullin subunits of the SCF-type E3 ligase complexes, leading to decrease the Ubl ligase activity of SCF. In the complex, it probably acts as the catalytic center that mediates the cleavage of Nedd8 from cullins. It however has no metalloprotease activity by itself and requires the other subunits of the CSN complex. The CSN complex is involved in repression of photomorphogenesis in darkness by regulating the activity of COP1-containing Ubl ligase complexes. The chain is COP9 signalosome complex subunit 5b (CSN5B) from Brassica oleracea (Wild cabbage).